Reading from the N-terminus, the 137-residue chain is Proofreading thioesterase EntH (137 aa).

E63 (nucleophile or proton acceptor) is an active-site residue.

This sequence belongs to the thioesterase PaaI family. In terms of assembly, homotetramer. Dimer of dimers. Interacts specifically with the aryl carrier protein (ArCP) domain of EntB.

It localises to the cytoplasm. It functions in the pathway siderophore biosynthesis; enterobactin biosynthesis. In terms of biological role, required for optimal enterobactin synthesis. Acts as a proofreading enzyme that prevents EntB misacylation by hydrolyzing the thioester bound existing between EntB and wrongly charged molecules. In Salmonella paratyphi B (strain ATCC BAA-1250 / SPB7), this protein is Proofreading thioesterase EntH.